Reading from the N-terminus, the 500-residue chain is L-arabinose isomerase (500 aa).

Residues Glu-306, Glu-333, His-350, and His-450 each coordinate Mn(2+).

It belongs to the arabinose isomerase family. As to quaternary structure, homohexamer. Mn(2+) is required as a cofactor.

It catalyses the reaction beta-L-arabinopyranose = L-ribulose. It participates in carbohydrate degradation; L-arabinose degradation via L-ribulose; D-xylulose 5-phosphate from L-arabinose (bacterial route): step 1/3. Functionally, catalyzes the conversion of L-arabinose to L-ribulose. This is L-arabinose isomerase (araA) from Escherichia coli (strain K12).